Reading from the N-terminus, the 104-residue chain is Gastrin (104 aa).

The first 21 residues, 1 to 21 (MPRLCVCMLVLVLALATFSEA), serve as a signal peptide directing secretion. Positions 22–58 (SWKPRSQLQDASSGPRTNGALEQHQLEKLGPASHHRR) are excised as a propeptide. The tract at residues 23-104 (WKPRSQLQDA…RSAEEEDQYN (82 aa)) is disordered. Polar residues predominate over residues 25–37 (PRSQLQDASSGPR). Y87 carries the post-translational modification Sulfotyrosine. F92 carries the post-translational modification Phenylalanine amide. S96 carries the phosphoserine modification. Positions 96–104 (SAEEEDQYN) are excised as a propeptide. The residue at position 103 (Y103) is a Sulfotyrosine.

The protein belongs to the gastrin/cholecystokinin family. In terms of processing, sulfation on Tyr-87 enhances proteolytic processing, and blocks peptide degradation. Levels of sulfation differ between proteolytically-cleaved gastrins and between tissues.

Its subcellular location is the secreted. In terms of biological role, gastrin stimulates the stomach mucosa to produce and secrete hydrochloric acid and the pancreas to secrete its digestive enzymes. It also stimulates smooth muscle contraction and increases blood circulation and water secretion in the stomach and intestine. The chain is Gastrin (Gast) from Rattus norvegicus (Rat).